A 120-amino-acid chain; its full sequence is Large ribosomal subunit protein uL18 (120 aa).

It belongs to the universal ribosomal protein uL18 family. As to quaternary structure, part of the 50S ribosomal subunit; part of the 5S rRNA/L5/L18/L25 subcomplex. Contacts the 5S and 23S rRNAs.

Its function is as follows. This is one of the proteins that bind and probably mediate the attachment of the 5S RNA into the large ribosomal subunit, where it forms part of the central protuberance. In Brucella suis biovar 1 (strain 1330), this protein is Large ribosomal subunit protein uL18.